Consider the following 203-residue polypeptide: Outer-membrane lipoprotein LolB (203 aa).

An N-terminal signal peptide occupies residues 1-22 (MPVNLNHTLLLCLLVAASLLSG). Cys23 carries the N-palmitoyl cysteine lipid modification. Cys23 is lipidated: S-diacylglycerol cysteine.

This sequence belongs to the LolB family. Monomer.

It localises to the cell outer membrane. Plays a critical role in the incorporation of lipoproteins in the outer membrane after they are released by the LolA protein. The sequence is that of Outer-membrane lipoprotein LolB from Shewanella denitrificans (strain OS217 / ATCC BAA-1090 / DSM 15013).